A 104-amino-acid chain; its full sequence is Inclusion membrane protein F (104 aa).

A run of 2 helical transmembrane segments spans residues 39–59 (LVVA…SLVA) and 70–90 (LAVL…VLFI).

It localises to the secreted. It is found in the host vacuole. The protein resides in the host pathogen-containing vacuole. Its subcellular location is the host pathogen-containing vacuole membrane. Inclusion membrane protein probably involved in early modification events of the chlamydial inclusion. In Chlamydia trachomatis serovar D (strain ATCC VR-885 / DSM 19411 / UW-3/Cx), this protein is Inclusion membrane protein F (incF).